We begin with the raw amino-acid sequence, 276 residues long: Energy-coupling factor transporter ATP-binding protein EcfA2 (276 aa).

One can recognise an ABC transporter domain in the interval Met-1–Asp-233. Gly-27 to Ser-34 is a binding site for ATP. The active-site Proton acceptor is Glu-158.

It belongs to the ABC transporter superfamily. Energy-coupling factor EcfA family. Forms a stable energy-coupling factor (ECF) transporter complex composed of 2 membrane-embedded substrate-binding proteins (S component), 2 ATP-binding proteins (A component) and 2 transmembrane proteins (T component).

The protein resides in the cell membrane. ATP-binding (A) component of a common energy-coupling factor (ECF) ABC-transporter complex. Unlike classic ABC transporters this ECF transporter provides the energy necessary to transport a number of different substrates. This Bacillus subtilis (strain 168) protein is Energy-coupling factor transporter ATP-binding protein EcfA2.